A 476-amino-acid polypeptide reads, in one-letter code: Sulfate adenylyltransferase subunit 1 (476 aa).

Residues 24-241 (KSLLRFLTCG…EDVDFVQEQE (218 aa)) form the tr-type G domain. Positions 33–40 (GSVDDGKS) are G1. 33–40 (GSVDDGKS) contributes to the GTP binding site. Residues 91-95 (GITID) form a G2 region. Residues 112 to 115 (DTPG) form a G3 region. Residues 112–116 (DTPGH) and 167–170 (NKMD) contribute to the GTP site. Residues 167–170 (NKMD) are G4. Residues 205–207 (SAL) are G5.

This sequence belongs to the TRAFAC class translation factor GTPase superfamily. Classic translation factor GTPase family. CysN/NodQ subfamily. As to quaternary structure, heterodimer composed of CysD, the smaller subunit, and CysN.

The catalysed reaction is sulfate + ATP + H(+) = adenosine 5'-phosphosulfate + diphosphate. It participates in sulfur metabolism; hydrogen sulfide biosynthesis; sulfite from sulfate: step 1/3. With CysD forms the ATP sulfurylase (ATPS) that catalyzes the adenylation of sulfate producing adenosine 5'-phosphosulfate (APS) and diphosphate, the first enzymatic step in sulfur assimilation pathway. APS synthesis involves the formation of a high-energy phosphoric-sulfuric acid anhydride bond driven by GTP hydrolysis by CysN coupled to ATP hydrolysis by CysD. The polypeptide is Sulfate adenylyltransferase subunit 1 (Photobacterium profundum (strain SS9)).